Here is a 178-residue protein sequence, read N- to C-terminus: Protein GrpE (178 aa).

Over residues 1–11 (MAEDQAPREET) the composition is skewed to basic and acidic residues. A disordered region spans residues 1-30 (MAEDQAPREETVEAPELTEAPEIDELETLR).

It belongs to the GrpE family. Homodimer.

It is found in the cytoplasm. In terms of biological role, participates actively in the response to hyperosmotic and heat shock by preventing the aggregation of stress-denatured proteins, in association with DnaK and GrpE. It is the nucleotide exchange factor for DnaK and may function as a thermosensor. Unfolded proteins bind initially to DnaJ; upon interaction with the DnaJ-bound protein, DnaK hydrolyzes its bound ATP, resulting in the formation of a stable complex. GrpE releases ADP from DnaK; ATP binding to DnaK triggers the release of the substrate protein, thus completing the reaction cycle. Several rounds of ATP-dependent interactions between DnaJ, DnaK and GrpE are required for fully efficient folding. The sequence is that of Protein GrpE from Cereibacter sphaeroides (strain ATCC 17023 / DSM 158 / JCM 6121 / CCUG 31486 / LMG 2827 / NBRC 12203 / NCIMB 8253 / ATH 2.4.1.) (Rhodobacter sphaeroides).